Reading from the N-terminus, the 183-residue chain is Threonylcarbamoyl-AMP synthase (183 aa).

The YrdC-like domain occupies Met1–Gly183.

Belongs to the SUA5 family. TsaC subfamily.

Its subcellular location is the cytoplasm. It carries out the reaction L-threonine + hydrogencarbonate + ATP = L-threonylcarbamoyladenylate + diphosphate + H2O. Required for the formation of a threonylcarbamoyl group on adenosine at position 37 (t(6)A37) in tRNAs that read codons beginning with adenine. Catalyzes the conversion of L-threonine, HCO(3)(-)/CO(2) and ATP to give threonylcarbamoyl-AMP (TC-AMP) as the acyladenylate intermediate, with the release of diphosphate. In Actinobacillus succinogenes (strain ATCC 55618 / DSM 22257 / CCUG 43843 / 130Z), this protein is Threonylcarbamoyl-AMP synthase.